A 359-amino-acid chain; its full sequence is MTGSKTALIMAGGTGGHIFPGLAVAEALRARGWRVHWLGAPASMEARIAAQHGFALESVTFSGVRGKGLATLALLPLRLLRAFWQARAVLRRVQPDVLVGLGGYISFPGALMGLLRRKPLVLHEQNAVAGLANRLLAGRADRVFAAFPGAFGSAAPKARWVGNPLRAAFTQQAGPAERFAARTGPLQLLVMGGSLGARALNELVPQALALLPAAQRPQVLHQSGATQIEALRAHYAAAGVQAELRPFIDDVACALAAADVIVCRAGASTVSEIAAVGAAALFVPLPSAVDDHQTRNARWLVDAGGGWLLPQHELSPRGLAQMLSNLERPALLDKALKAHAMQKTSATQELVGACEELAA.

Residues 14-16 (TGG), Asn126, Arg166, Ser194, Ile248, and Gln293 contribute to the UDP-N-acetyl-alpha-D-glucosamine site.

It belongs to the glycosyltransferase 28 family. MurG subfamily.

Its subcellular location is the cell inner membrane. It carries out the reaction di-trans,octa-cis-undecaprenyl diphospho-N-acetyl-alpha-D-muramoyl-L-alanyl-D-glutamyl-meso-2,6-diaminopimeloyl-D-alanyl-D-alanine + UDP-N-acetyl-alpha-D-glucosamine = di-trans,octa-cis-undecaprenyl diphospho-[N-acetyl-alpha-D-glucosaminyl-(1-&gt;4)]-N-acetyl-alpha-D-muramoyl-L-alanyl-D-glutamyl-meso-2,6-diaminopimeloyl-D-alanyl-D-alanine + UDP + H(+). It functions in the pathway cell wall biogenesis; peptidoglycan biosynthesis. Cell wall formation. Catalyzes the transfer of a GlcNAc subunit on undecaprenyl-pyrophosphoryl-MurNAc-pentapeptide (lipid intermediate I) to form undecaprenyl-pyrophosphoryl-MurNAc-(pentapeptide)GlcNAc (lipid intermediate II). The chain is UDP-N-acetylglucosamine--N-acetylmuramyl-(pentapeptide) pyrophosphoryl-undecaprenol N-acetylglucosamine transferase from Verminephrobacter eiseniae (strain EF01-2).